Here is a 66-residue protein sequence, read N- to C-terminus: uncharacterized protein (66 aa).

The first 25 residues, 1–25, serve as a signal peptide directing secretion; sequence MIVIILLFISIIVFLSVIQPQPSKN. Positions 21-31 are enriched in polar residues; it reads QPSKNKSRQQA. Residues 21 to 66 are disordered; that stretch reads QPSKNKSRQQADSGYFGYSDHSSHHDGCSSDGGFSDSGCGGGGGGD.

This is an uncharacterized protein from Bacillus subtilis (strain 168).